A 329-amino-acid chain; its full sequence is MARRYLFEFEKPLVELEQQIEQIRELARDSEVDVSQQLLQLETLAARRREEIFQALTPAEKIQVARHPHRPSTLDFIQMFCDDWVELHGDRRGSDDQALVGGVGRIGKRSVLLIGHQKGRDTKENVARNFGMATPGGYRKALRLMDHADRFRLPILTFIDTPGAYAGLLAEEQGQGEAIAVNLREMFRLRVPVIATVIGEGGSGGALGIGVADRLLMFEHSVYTVASPEACASILWRDAAKAPEAAAALKITGPDLLSLGVVDEVLPEPAGGNNWAPLQAGEVLREAIERHLDDLLGLKVNQLRESRYRKFRAMGRVLDPSSSETGLPA.

Positions 40–294 (QLETLAARRR…REAIERHLDD (255 aa)) constitute a CoA carboxyltransferase C-terminal domain.

It belongs to the AccA family. Acetyl-CoA carboxylase is a heterohexamer composed of biotin carboxyl carrier protein (AccB), biotin carboxylase (AccC) and two subunits each of ACCase subunit alpha (AccA) and ACCase subunit beta (AccD).

The protein resides in the cytoplasm. The enzyme catalyses N(6)-carboxybiotinyl-L-lysyl-[protein] + acetyl-CoA = N(6)-biotinyl-L-lysyl-[protein] + malonyl-CoA. The protein operates within lipid metabolism; malonyl-CoA biosynthesis; malonyl-CoA from acetyl-CoA: step 1/1. In terms of biological role, component of the acetyl coenzyme A carboxylase (ACC) complex. First, biotin carboxylase catalyzes the carboxylation of biotin on its carrier protein (BCCP) and then the CO(2) group is transferred by the carboxyltransferase to acetyl-CoA to form malonyl-CoA. The polypeptide is Acetyl-coenzyme A carboxylase carboxyl transferase subunit alpha (Prochlorococcus marinus (strain MIT 9303)).